The chain runs to 62 residues: Photosystem II reaction center protein Z (62 aa).

Helical transmembrane passes span 8 to 28 (ALAALVALSFLMVIGVPVAYA) and 41 to 61 (FVGSIAWTVLVIAVGVLNFFV).

This sequence belongs to the PsbZ family. PSII is composed of 1 copy each of membrane proteins PsbA, PsbB, PsbC, PsbD, PsbE, PsbF, PsbH, PsbI, PsbJ, PsbK, PsbL, PsbM, PsbT, PsbX, PsbY, PsbZ, Psb30/Ycf12, peripheral proteins PsbO, CyanoQ (PsbQ), PsbU, PsbV and a large number of cofactors. It forms dimeric complexes.

The protein localises to the cellular thylakoid membrane. May control the interaction of photosystem II (PSII) cores with the light-harvesting antenna, regulates electron flow through the 2 photosystem reaction centers. PSII is a light-driven water plastoquinone oxidoreductase, using light energy to abstract electrons from H(2)O, generating a proton gradient subsequently used for ATP formation. This chain is Photosystem II reaction center protein Z, found in Picosynechococcus sp. (strain ATCC 27264 / PCC 7002 / PR-6) (Agmenellum quadruplicatum).